The sequence spans 457 residues: 3-ketoacyl-CoA thiolase 5, peroxisomal (457 aa).

The transit peptide at 1–37 (MERAMERQKILLRHLNPVSSSNSSLKHEPSLLSPVNC) directs the protein to the peroxisome. Residue Cys137 is the Acyl-thioester intermediate of the active site. Residues His394 and Cys426 each act as proton acceptor in the active site.

Belongs to the thiolase-like superfamily. Thiolase family. As to quaternary structure, homodimer. As to expression, expressed in seedlings and wounded leaves.

It localises to the peroxisome. The enzyme catalyses an acyl-CoA + acetyl-CoA = a 3-oxoacyl-CoA + CoA. It functions in the pathway lipid metabolism; fatty acid metabolism. Its function is as follows. Probably involved in long chain fatty-acid beta-oxidation prior to gluconeogenesis during germination and subsequent seedling growth. Involved in systemic jasmonic acid (JA) biosynthesis after wounding and may be during senescence. This is 3-ketoacyl-CoA thiolase 5, peroxisomal (KAT5) from Arabidopsis thaliana (Mouse-ear cress).